We begin with the raw amino-acid sequence, 296 residues long: Acetylglutamate kinase (296 aa).

Residues Gly-67–Gly-68, Arg-89, and Asn-194 each bind substrate.

The protein belongs to the acetylglutamate kinase family. ArgB subfamily.

Its subcellular location is the cytoplasm. It carries out the reaction N-acetyl-L-glutamate + ATP = N-acetyl-L-glutamyl 5-phosphate + ADP. The protein operates within amino-acid biosynthesis; L-arginine biosynthesis; N(2)-acetyl-L-ornithine from L-glutamate: step 2/4. In terms of biological role, catalyzes the ATP-dependent phosphorylation of N-acetyl-L-glutamate. This is Acetylglutamate kinase from Syntrophus aciditrophicus (strain SB).